A 426-amino-acid polypeptide reads, in one-letter code: Protein arginine N-methyltransferase 2 (426 aa).

2 disordered regions span residues 65 to 88 (DEEE…GQES) and 155 to 175 (DEEM…AVAA). Residues 73-88 (NGVQTNGDRQTHGQES) are compositionally biased toward polar residues. The span at 155–168 (DEEMEEDGEQEQEQ) shows a compositional bias: acidic residues. In terms of domain architecture, RMT2 spans 207–426 (PSVTSSRYLN…YRLPLCKYMD (220 aa)). S-adenosyl-L-methionine is bound by residues Tyr-214, Met-243, 263-268 (HGMGIV), 284-286 (EAH), 311-312 (WQ), and Asp-331.

It belongs to the class I-like SAM-binding methyltransferase superfamily. RMT2 methyltransferase family. As to quaternary structure, monomer.

It is found in the cytoplasm. The protein resides in the nucleus. Functionally, S-adenosyl-L-methionine-dependent protein-arginine N-methyltransferase that methylates the delta-nitrogen atom of arginine residues to form N5-methylarginine (type IV) in target proteins. Monomethylates ribosomal protein L12. In Emericella nidulans (strain FGSC A4 / ATCC 38163 / CBS 112.46 / NRRL 194 / M139) (Aspergillus nidulans), this protein is Protein arginine N-methyltransferase 2.